We begin with the raw amino-acid sequence, 546 residues long: Coatomer subunit delta (546 aa).

Residues 190-440 (NRFMGSKDPN…VIFTIPVFPQ (251 aa)) form an interaction with DSL1 region. The segment at 236–287 (PMATSQRAGHSATGGMKLGGGAGRRAGAAPRPSAISSASSGTPPPPEEDVPE) is disordered. The span at 260–276 (RAGAAPRPSAISSASSG) shows a compositional bias: low complexity. Thr277 bears the Phosphothreonine mark. The MHD domain occupies 288–546 (NNGILISIKE…SLKSDEYLVQ (259 aa)).

Belongs to the adaptor complexes medium subunit family. Delta-COP subfamily. In terms of assembly, oligomeric complex that consists of at least the alpha, beta, beta', gamma, delta, epsilon and zeta subunits. Interacts with DSL1.

It localises to the cytoplasm. The protein localises to the golgi apparatus membrane. It is found in the cytoplasmic vesicle. Its subcellular location is the COPI-coated vesicle membrane. In terms of biological role, the coatomer is a cytosolic protein complex that binds to dilysine motifs and reversibly associates with Golgi non-clathrin-coated vesicles, which further mediate biosynthetic protein transport from the ER, via the Golgi up to the trans Golgi network. Coatomer complex is required for budding from Golgi membranes, and is essential for the retrograde Golgi-to-ER transport of dilysine-tagged proteins. This chain is Coatomer subunit delta (RET2), found in Saccharomyces cerevisiae (strain ATCC 204508 / S288c) (Baker's yeast).